We begin with the raw amino-acid sequence, 304 residues long: Cell surface-binding protein OPG105 (304 aa).

In terms of domain architecture, Alpha-carbonic anhydrase spans 1-235 (MPQQLSPINI…NDDTQVYYSG (235 aa)). Over 1-275 (MPQQLSPINI…YQKYIEGNKT (275 aa)) the chain is Virion surface. The helical transmembrane segment at 276-294 (FAIIAIVFVFILTAILFLM) threads the bilayer. The Intravirion segment spans residues 295–304 (SRRYSREKQN).

The protein belongs to the alpha-carbonic anhydrase family. Homodimer; disulfide-linked. Apparently non-glycosylated.

It localises to the virion membrane. In terms of biological role, binds to chondroitin sulfate on the cell surface to provide virion attachment to target cell. This chain is Cell surface-binding protein OPG105 (OPG105), found in Rabbitpox virus (strain Utrecht) (RPV).